The following is a 1556-amino-acid chain: Ubiquitin carboxyl-terminal hydrolase 47 (1556 aa).

The disordered stretch occupies residues 117-231 (MKSDGEKAKS…AKKTAKVTSK (115 aa)). Residues 146–156 (ASGSSSPSKAK) are compositionally biased toward low complexity. Phosphoserine is present on residues serine 172 and serine 173. The segment covering 180-189 (IKTTAAKISK) has biased composition (low complexity). Residues 191–200 (GSEKAPRASP) show a composition bias toward basic and acidic residues. Residues 208-219 (TEINSKNTSSES) are compositionally biased toward polar residues. The residue at position 238 (serine 238) is a Phosphoserine. Residues 396–779 (VGLVNQAMTC…NAYMLMYRQV (384 aa)) enclose the USP domain. Catalysis depends on cysteine 405, which acts as the Nucleophile. Polar residues-rich tracts occupy residues 628–642 (NRSG…QLNG) and 661–673 (LSSG…SSSQ). The tract at residues 628–697 (NRSGNSGEQN…SSSTSKSAKQ (70 aa)) is disordered. The span at 688 to 697 (SSSTSKSAKQ) shows a compositional bias: low complexity. Histidine 720 functions as the Proton acceptor in the catalytic mechanism. The disordered stretch occupies residues 1087–1148 (EPMSQPSPSH…LSSPEDEAAS (62 aa)). Positions 1109–1125 (DGDRTLVETDNMAHRGG) are enriched in basic and acidic residues. Residues 1128–1141 (SQVSSTSHSPQLSS) are compositionally biased toward low complexity. Phosphoserine occurs at positions 1131, 1132, 1140, 1141, 1199, 1201, and 1205.

Belongs to the peptidase C19 family. Interacts with ttk.

It localises to the nucleus. The enzyme catalyses Thiol-dependent hydrolysis of ester, thioester, amide, peptide and isopeptide bonds formed by the C-terminal Gly of ubiquitin (a 76-residue protein attached to proteins as an intracellular targeting signal).. Its function is as follows. Ubiquitin-specific protease that deubiquitinates target proteins to regulate different cellular and developmental pathways. Functions downstream of Dsor1/MEK to positively regulate the Ras/MAPK signaling pathway. Likely to modulate the pathway during various cellular and developmental processes including rl/MAPK activation by the receptors InR, Egfr and sevenless/sev. Functions in the post-translational stabilization of rl/MAPK levels in a mechanism that is independent of rl activity and opposes the activity of the E2 enzyme Unc6 and the putative E3 ligases poe, Ufd4 and Kcmf1, which mediate the ubiquitination and proteasomal degradation of rl. During eye development it may also act downstream of rl/MAPK to negatively regulate the Ras/MAPK signaling pathway by stabilizing the transcriptional repressor ttk and consequently inhibiting photoreceptor cell development. This suggests that at least during eye development, it may act in both the positive and negative regulation of the Ras/MAPK signaling pathway to mediate the development of different cell types. Positively regulates border follicle cell migration during oogenesis by mediating the deubiquitination and stabilization of slbo. In the wing disks it positively regulates wg signaling by stabilizing arm. Has an effect on position-effect variegation. This is Ubiquitin carboxyl-terminal hydrolase 47 from Drosophila melanogaster (Fruit fly).